The chain runs to 186 residues: Ribosome-recycling factor (186 aa).

Belongs to the RRF family.

It is found in the cytoplasm. Functionally, responsible for the release of ribosomes from messenger RNA at the termination of protein biosynthesis. May increase the efficiency of translation by recycling ribosomes from one round of translation to another. The chain is Ribosome-recycling factor from Burkholderia lata (strain ATCC 17760 / DSM 23089 / LMG 22485 / NCIMB 9086 / R18194 / 383).